The sequence spans 507 residues: Dolichyl pyrophosphate Man9GlcNAc2 alpha-1,3-glucosyltransferase (507 aa).

Topologically, residues Met1–Glu2 are cytoplasmic. Residues Ser3–Leu23 traverse the membrane as a helical segment. Topologically, residues Ser24 to Ala114 are lumenal. N-linked (GlcNAc...) asparagine glycosylation occurs at Asn59. The helical transmembrane segment at Thr115 to Leu135 threads the bilayer. Residues Lys136–Lys143 are Cytoplasmic-facing. The helical transmembrane segment at Ile144–Phe164 threads the bilayer. At Gln165–Gly172 the chain is on the lumenal side. The helical transmembrane segment at Phe173–Phe193 threads the bilayer. Residues Cys194–Ala229 lie on the Cytoplasmic side of the membrane. The chain crosses the membrane as a helical span at residues Leu230–Leu250. At Thr251 to Gln297 the chain is on the lumenal side. Residues Ile298 to Val318 form a helical membrane-spanning segment. Residues Arg319 to Cys332 lie on the Cytoplasmic side of the membrane. Residues Ala333–Leu353 traverse the membrane as a helical segment. Residues Pro354–Glu361 are Lumenal-facing. A helical transmembrane segment spans residues Ile362 to Leu382. Over Lys383 to Glu385 the chain is Cytoplasmic. The chain crosses the membrane as a helical span at residues Leu386–Pro406. Residues Met407–Arg437 lie on the Lumenal side of the membrane. The helical transmembrane segment at Ile438–Val458 threads the bilayer. Topologically, residues Thr459 to Asp468 are cytoplasmic. A helical transmembrane segment spans residues Leu469–Phe489. The Lumenal segment spans residues Asn490–Glu507.

Belongs to the ALG6/ALG8 glucosyltransferase family.

It is found in the endoplasmic reticulum membrane. The enzyme catalyses an alpha-D-Man-(1-&gt;2)-alpha-D-Man-(1-&gt;2)-alpha-D-Man-(1-&gt;3)-[alpha-D-Man-(1-&gt;2)-alpha-D-Man-(1-&gt;3)-[alpha-D-Man-(1-&gt;2)-alpha-D-Man-(1-&gt;6)]-alpha-D-Man-(1-&gt;6)]-beta-D-Man-(1-&gt;4)-beta-D-GlcNAc-(1-&gt;4)-alpha-D-GlcNAc-diphospho-di-trans,poly-cis-dolichol + a di-trans,poly-cis-dolichyl beta-D-glucosyl phosphate = an alpha-D-Glc-(1-&gt;3)-alpha-D-Man-(1-&gt;2)-alpha-D-Man-(1-&gt;2)-alpha-D-Man-(1-&gt;3)-[alpha-D-Man-(1-&gt;2)-alpha-D-Man-(1-&gt;3)-[alpha-D-Man-(1-&gt;2)-alpha-D-Man-(1-&gt;6)]-alpha-D-Man-(1-&gt;6)]-beta-D-Man-(1-&gt;4)-beta-D-GlcNAc-(1-&gt;4)-alpha-D-GlcNAc-diphospho-di-trans,poly-cis-dolichol + a di-trans,poly-cis-dolichyl phosphate + H(+). It functions in the pathway protein modification; protein glycosylation. In terms of biological role, dolichyl pyrophosphate Man9GlcNAc2 alpha-1,3-glucosyltransferase that operates in the biosynthetic pathway of dolichol-linked oligosaccharides, the glycan precursors employed in protein asparagine (N)-glycosylation. The assembly of dolichol-linked oligosaccharides begins on the cytosolic side of the endoplasmic reticulum membrane and finishes in its lumen. The sequential addition of sugars to dolichol pyrophosphate produces dolichol-linked oligosaccharides containing fourteen sugars, including two GlcNAcs, nine mannoses and three glucoses. Once assembled, the oligosaccharide is transferred from the lipid to nascent proteins by oligosaccharyltransferases. In the lumen of the endoplasmic reticulum, adds the first glucose residue from dolichyl phosphate glucose (Dol-P-Glc) onto the lipid-linked oligosaccharide intermediate Man(9)GlcNAc(2)-PP-Dol to produce Glc(1)Man(9)GlcNAc(2)-PP-Dol. Glc(1)Man(9)GlcNAc(2)-PP-Dol is a substrate for ALG8, the following enzyme in the biosynthetic pathway. The sequence is that of Dolichyl pyrophosphate Man9GlcNAc2 alpha-1,3-glucosyltransferase from Mus musculus (Mouse).